The following is a 198-amino-acid chain: Carnitine operon protein CaiE (198 aa).

Residues 174–198 (KPLTQAEENRPRLKGTTDVKPKSAQ) form a disordered region. Residues 180 to 198 (EENRPRLKGTTDVKPKSAQ) are compositionally biased toward basic and acidic residues.

Belongs to the transferase hexapeptide repeat family.

It functions in the pathway amine and polyamine metabolism; carnitine metabolism. In terms of biological role, overproduction of CaiE stimulates the activity of CaiB and CaiD. The sequence is that of Carnitine operon protein CaiE from Salmonella typhimurium (strain LT2 / SGSC1412 / ATCC 700720).